The following is a 590-amino-acid chain: RNA-binding protein 47 (590 aa).

Polar residues predominate over residues 1–21 (MTAEDSTTAMNSDPTVGSSTK). Positions 1 to 26 (MTAEDSTTAMNSDPTVGSSTKVPEGV) are disordered. 3 RRM domains span residues 71 to 149 (CEVF…CSVD), 151 to 233 (CRLF…WAEP), and 246 to 318 (KILY…LAKP). 2 positions are modified to asymmetric dimethylarginine; alternate: R396 and R407. Residues R396 and R407 each carry the omega-N-methylarginine; alternate modification.

This sequence belongs to the RRM RBM47 family. As to quaternary structure, homodimer. Interacts with A1CF. Interacts with APOBEC1; form an mRNA editing complex. Interacts with RBPMS.

It is found in the nucleus. Its subcellular location is the cytoplasm. Its function is as follows. Single-stranded RNA-binding protein that functions in a variety of RNA processes, including alternative splicing, RNA stabilization, and RNA editing. Functions as an enzyme-substrate adapter for the cytidine deaminase APOBEC1. With APOBEC1 forms an mRNA editing complex involved into cytidine to uridine editing of a variety of mRNA molecules. Through the binding of their 3'UTR, also stabilizes a variety of mRNAs and regulates the expression of genes such as the interferon alpha/beta receptor and interleukin-10. Also involved in the alternative splicing of several genes including TJP1. Binds the pre-mRNA (U)GCAUG consensus sequences in downstream intronic regions of alternative exons regulating their exclusion and inclusion into mRNAs. Independently of its RNA-binding activity, could negatively regulate MAVS by promoting its lysosomal degradation. The sequence is that of RNA-binding protein 47 from Rattus norvegicus (Rat).